The sequence spans 107 residues: MPQQKLHVKSGDTVVVISGKDKGKRGKVLRTFPSEQKVLVEGVNMINKHTRATQENPQGGIVEQEGPVYADKVMVYCSKCQKPVRTGAKIDDKGNKSRICKKCGVEL.

The protein belongs to the universal ribosomal protein uL24 family. In terms of assembly, part of the 50S ribosomal subunit.

In terms of biological role, one of two assembly initiator proteins, it binds directly to the 5'-end of the 23S rRNA, where it nucleates assembly of the 50S subunit. Functionally, one of the proteins that surrounds the polypeptide exit tunnel on the outside of the subunit. The chain is Large ribosomal subunit protein uL24 from Natranaerobius thermophilus (strain ATCC BAA-1301 / DSM 18059 / JW/NM-WN-LF).